The chain runs to 160 residues: Transcription elongation factor GreA (160 aa).

Positions 49–73 form a coiled coil; that stretch reads HAAKEEQSHNEGRIADLEDKLARAD.

Belongs to the GreA/GreB family.

Its function is as follows. Necessary for efficient RNA polymerase transcription elongation past template-encoded arresting sites. The arresting sites in DNA have the property of trapping a certain fraction of elongating RNA polymerases that pass through, resulting in locked ternary complexes. Cleavage of the nascent transcript by cleavage factors such as GreA or GreB allows the resumption of elongation from the new 3'terminus. GreA releases sequences of 2 to 3 nucleotides. This chain is Transcription elongation factor GreA, found in Rhodopseudomonas palustris (strain BisA53).